A 99-amino-acid polypeptide reads, in one-letter code: Protein translation factor SUI1 homolog (99 aa).

This sequence belongs to the SUI1 family.

The protein is Protein translation factor SUI1 homolog of Picrophilus torridus (strain ATCC 700027 / DSM 9790 / JCM 10055 / NBRC 100828 / KAW 2/3).